A 706-amino-acid polypeptide reads, in one-letter code: Ribosomal RNA large subunit methyltransferase K/L (706 aa).

Positions 43 to 154 (LMYQSLLWSR…RDMASVALDL (112 aa)) constitute a THUMP domain.

This sequence belongs to the methyltransferase superfamily. RlmKL family.

Its subcellular location is the cytoplasm. It catalyses the reaction guanosine(2445) in 23S rRNA + S-adenosyl-L-methionine = N(2)-methylguanosine(2445) in 23S rRNA + S-adenosyl-L-homocysteine + H(+). The enzyme catalyses guanosine(2069) in 23S rRNA + S-adenosyl-L-methionine = N(2)-methylguanosine(2069) in 23S rRNA + S-adenosyl-L-homocysteine + H(+). In terms of biological role, specifically methylates the guanine in position 2445 (m2G2445) and the guanine in position 2069 (m7G2069) of 23S rRNA. In Yersinia pseudotuberculosis serotype IB (strain PB1/+), this protein is Ribosomal RNA large subunit methyltransferase K/L.